A 176-amino-acid polypeptide reads, in one-letter code: ATP-dependent protease subunit HslV (176 aa).

Thr-2 is an active-site residue. 3 residues coordinate Na(+): Gly-157, Cys-160, and Thr-163.

The protein belongs to the peptidase T1B family. HslV subfamily. A double ring-shaped homohexamer of HslV is capped on each side by a ring-shaped HslU homohexamer. The assembly of the HslU/HslV complex is dependent on binding of ATP.

It localises to the cytoplasm. The enzyme catalyses ATP-dependent cleavage of peptide bonds with broad specificity.. With respect to regulation, allosterically activated by HslU binding. Protease subunit of a proteasome-like degradation complex believed to be a general protein degrading machinery. In Escherichia coli O45:K1 (strain S88 / ExPEC), this protein is ATP-dependent protease subunit HslV.